A 409-amino-acid polypeptide reads, in one-letter code: Tryptophan synthase beta chain (409 aa).

N6-(pyridoxal phosphate)lysine is present on Lys-98.

This sequence belongs to the TrpB family. Tetramer of two alpha and two beta chains. Pyridoxal 5'-phosphate is required as a cofactor.

The catalysed reaction is (1S,2R)-1-C-(indol-3-yl)glycerol 3-phosphate + L-serine = D-glyceraldehyde 3-phosphate + L-tryptophan + H2O. The protein operates within amino-acid biosynthesis; L-tryptophan biosynthesis; L-tryptophan from chorismate: step 5/5. Its function is as follows. The beta subunit is responsible for the synthesis of L-tryptophan from indole and L-serine. The chain is Tryptophan synthase beta chain (trpB) from Cereibacter sphaeroides (strain ATCC 17023 / DSM 158 / JCM 6121 / CCUG 31486 / LMG 2827 / NBRC 12203 / NCIMB 8253 / ATH 2.4.1.) (Rhodobacter sphaeroides).